Here is a 57-residue protein sequence, read N- to C-terminus: Benzylsuccinate synthase gamma subunit (57 aa).

Heterohexamer composed of 2 alpha subunits, 2 beta subunits and 2 gamma subunits.

The enzyme catalyses toluene + fumarate = 2-benzylsuccinate. It functions in the pathway xenobiotic degradation; toluene degradation. With respect to regulation, activated by the benzylsuccinate synthase activating enzyme BssD. Rapidly inactivated by oxygen. Its function is as follows. Catalyzes the addition of fumarate to the methyl group of toluene, leading to the formation of benzylsuccinate. This is Benzylsuccinate synthase gamma subunit (bssC) from Thauera aromatica.